Consider the following 108-residue polypeptide: Nucleoid-associated protein BARBAKC583_1239 (108 aa).

This sequence belongs to the YbaB/EbfC family. As to quaternary structure, homodimer.

It localises to the cytoplasm. It is found in the nucleoid. Its function is as follows. Binds to DNA and alters its conformation. May be involved in regulation of gene expression, nucleoid organization and DNA protection. The sequence is that of Nucleoid-associated protein BARBAKC583_1239 from Bartonella bacilliformis (strain ATCC 35685 / KC583 / Herrer 020/F12,63).